The following is a 300-amino-acid chain: GTPase Era (300 aa).

Residues 4–173 (KYGIVAIVGK…INTIKNYLHK (170 aa)) enclose the Era-type G domain. A G1 region spans residues 12–19 (GKPNVGKS). 12–19 (GKPNVGKS) contacts GTP. The segment at 38–42 (QTTRN) is G2. Residues 59-62 (DTPG) form a G3 region. GTP-binding positions include 59 to 63 (DTPGF) and 122 to 125 (SKAE). Residues 122–125 (SKAE) form a G4 region. The G5 stretch occupies residues 152–154 (ISA). Residues 204–282 (LNHEVPHGVG…SLTIFVKVEN (79 aa)) enclose the KH type-2 domain.

This sequence belongs to the TRAFAC class TrmE-Era-EngA-EngB-Septin-like GTPase superfamily. Era GTPase family. In terms of assembly, monomer.

Its subcellular location is the cytoplasm. It localises to the cell membrane. Its function is as follows. An essential GTPase that binds both GDP and GTP, with rapid nucleotide exchange. Plays a role in 16S rRNA processing and 30S ribosomal subunit biogenesis and possibly also in cell cycle regulation and energy metabolism. The chain is GTPase Era from Ureaplasma parvum serovar 3 (strain ATCC 27815 / 27 / NCTC 11736).